The following is a 129-amino-acid chain: UPF0102 protein Mnod_0024 (129 aa).

It belongs to the UPF0102 family.

The chain is UPF0102 protein Mnod_0024 from Methylobacterium nodulans (strain LMG 21967 / CNCM I-2342 / ORS 2060).